A 445-amino-acid polypeptide reads, in one-letter code: Phosphoglucosamine mutase (445 aa).

S102 (phosphoserine intermediate) is an active-site residue. Positions 102, 241, 243, and 245 each coordinate Mg(2+). The residue at position 102 (S102) is a Phosphoserine.

This sequence belongs to the phosphohexose mutase family. Requires Mg(2+) as cofactor. Post-translationally, activated by phosphorylation.

The enzyme catalyses alpha-D-glucosamine 1-phosphate = D-glucosamine 6-phosphate. In terms of biological role, catalyzes the conversion of glucosamine-6-phosphate to glucosamine-1-phosphate. This chain is Phosphoglucosamine mutase, found in Aliivibrio fischeri (strain ATCC 700601 / ES114) (Vibrio fischeri).